A 107-amino-acid chain; its full sequence is UPF0145 protein CKO_02237 (107 aa).

This sequence belongs to the UPF0145 family.

In Citrobacter koseri (strain ATCC BAA-895 / CDC 4225-83 / SGSC4696), this protein is UPF0145 protein CKO_02237.